Consider the following 178-residue polypeptide: uncharacterized protein (178 aa).

Residues 1–19 form the signal peptide; sequence MINRKILLTSLLLIFTVLS. Catalysis depends on residues R52, E60, and R94.

This sequence belongs to the thermonuclease family.

This is an uncharacterized protein from Haemophilus influenzae (strain ATCC 51907 / DSM 11121 / KW20 / Rd).